Reading from the N-terminus, the 285-residue chain is MLLATFKLCAGSSYRHVRNMKGLRHQAALAIGQELNWRAPGGPTQSGWINQVRRQSSLLGSQLEDTLYSDQELAYIQQGEEAMQKALGILRNQEGWKEENQQANGDKVLSKVVPDVGKVFRLEVEVDQPMERLYEELVERMEAMGEWNPNVKEIKVLQKIGKDTVITHELAAESAGNLVGPRDFVSVRCAKRRGSTCVLAGMATQFEEMPEQKGVIRAEHGPTCMVLHPLAGSPSKTKLTWLLSIDLKGWLPKTIINQVLSQTQVDFANHLRKRLESSPAPEARC.

A mitochondrion-targeting transit peptide spans 1-63 (MLLATFKLCA…RQSSLLGSQL (63 aa)). Ser-57 and Ser-195 each carry phosphoserine; by PKA. In terms of domain architecture, START spans 67 to 280 (LYSDQELAYI…LRKRLESSPA (214 aa)).

May interact with TSPO.

It is found in the mitochondrion. It catalyses the reaction cholesterol(in) = cholesterol(out). It functions in the pathway steroid metabolism; cholesterol metabolism. Functionally, plays a key role in steroid hormone synthesis by enhancing the metabolism of cholesterol into pregnenolone. Mediates the transfer of cholesterol from the outer mitochondrial membrane to the inner mitochondrial membrane where it is cleaved to pregnenolone. This is Steroidogenic acute regulatory protein, mitochondrial (STAR) from Equus caballus (Horse).